Reading from the N-terminus, the 433-residue chain is tRNA(Ile2) 2-agmatinylcytidine synthetase TiaS (433 aa).

The protein belongs to the TiaS family.

It is found in the cytoplasm. It catalyses the reaction cytidine(34) in tRNA(Ile2) + agmatine + ATP + H2O = 2-agmatinylcytidine(34) in tRNA(Ile2) + AMP + 2 phosphate + 2 H(+). Its function is as follows. ATP-dependent agmatine transferase that catalyzes the formation of 2-agmatinylcytidine (agm2C) at the wobble position (C34) of tRNA(Ile2), converting the codon specificity from AUG to AUA. The polypeptide is tRNA(Ile2) 2-agmatinylcytidine synthetase TiaS (Methanopyrus kandleri (strain AV19 / DSM 6324 / JCM 9639 / NBRC 100938)).